Reading from the N-terminus, the 263-residue chain is Chromosomal replication initiator protein DnaA (263 aa).

Glu-1 is a region of interest (domain I, interacts with DnaA modulators). A region of interest (domain II) is located at residue Glu-1. The interval 1–179 (ESGMGKTHLL…GSVSRLNFWS (179 aa)) is domain III, AAA+ region. ATP contacts are provided by Gly-3, Gly-5, Lys-6, and Thr-7. Positions 180–263 (QQNPEEKIIT…HTLAQIGEEF (84 aa)) are domain IV, binds dsDNA.

The protein belongs to the DnaA family. In terms of assembly, oligomerizes as a right-handed, spiral filament on DNA at oriC.

It localises to the cytoplasm. Plays an essential role in the initiation and regulation of chromosomal replication. ATP-DnaA binds to the origin of replication (oriC) to initiate formation of the DNA replication initiation complex once per cell cycle. Binds the DnaA box (a 9 base pair repeat at the origin) and separates the double-stranded (ds)DNA. Forms a right-handed helical filament on oriC DNA; dsDNA binds to the exterior of the filament while single-stranded (ss)DNA is stabiized in the filament's interior. The ATP-DnaA-oriC complex binds and stabilizes one strand of the AT-rich DNA unwinding element (DUE), permitting loading of DNA polymerase. After initiation quickly degrades to an ADP-DnaA complex that is not apt for DNA replication. Binds acidic phospholipids. In Mycoplasma mycoides, this protein is Chromosomal replication initiator protein DnaA.